The primary structure comprises 545 residues: Cytochrome P450 monooxygenase sdnB (545 aa).

Asn5 carries an N-linked (GlcNAc...) asparagine glycan. Residues 30–50 form a helical membrane-spanning segment; that stretch reads SILALTPLQGIALFLCLFWGY. Asn276 carries N-linked (GlcNAc...) asparagine glycosylation. A helical transmembrane segment spans residues 322–342; the sequence is LPILILIILVPAAHTTAMGIS. Residues Asn393 and Asn476 are each glycosylated (N-linked (GlcNAc...) asparagine). A heme-binding site is contributed by Cys486.

The protein belongs to the cytochrome P450 family. Heme is required as a cofactor.

The protein resides in the membrane. The protein operates within antibiotic biosynthesis. In terms of biological role, cytochrome P450 monooxygenase; part of the gene cluster that mediates the biosynthesis of sordarin and hypoxysordarin, glycoside antibiotics with a unique tetracyclic diterpene aglycone structure. First, the geranylgeranyl diphosphate synthase sdnC constructs GGDP from farnesyl diphosphate and isopentenyl diphosphate. The diterpene cyclase sdnA then catalyzes the cyclization of GGDP to afford cycloaraneosene. Cycloaraneosene is then hydroxylated four times by the putative cytochrome P450 monooxygenases sdnB, sdnE, sdnF and sdnH to give a hydroxylated cycloaraneosene derivative such as cycloaraneosene-8,9,13,19-tetraol. Although the order of the hydroxylations is unclear, at least C8, C9 and C13 of the cycloaraneosene skeleton are hydroxylated before the sordaricin formation. Dehydration of the 13-hydroxy group of the hydroxylated cycloaraneosene derivative might be catalyzed by an unassigned hypothetical protein such as sdnG and sdnP to construct the cyclopentadiene moiety. The FAD-dependent oxidoreductase sdnN is proposed to catalyze the oxidation at C9 of the hydroxylated cycloaraneosene derivative and also catalyze the Baeyer-Villiger oxidation to give the lactone intermediate. The presumed lactone intermediate would be hydrolyzed to give an acrolein moiety and a carboxylate moiety. Then, [4+2]cycloaddition would occur between the acrolein moiety and the cyclopentadiene moiety to give sordaricin. SdnN might also be involved in the [4+2]cycloaddition after the hypothesized oxidation to accommodate the oxidized product and prompt the [4+2]cycloaddition. GDP-6-deoxy-D-altrose may be biosynthesized from GDP-D-mannose by the putative GDP-mannose-4,6-dehydratase sdnI and the short-chain dehydrogenase sdnK. The glycosyltransferase sdnJ catalyzes the attachment of 6-deoxy-D-altrose onto the 19-hydroxy group of sordaricin to give 4'-O-demethylsordarin. The methyltransferase sdnD would complete the biosynthesis of sordarin. Sordarin can be further modified into hypoxysordarin. The unique acyl chain at the 3'-hydroxy group of hypoxysordarin would be constructed by an iterative type I PKS sdnO and the trans-acting polyketide methyltransferase sdnL. SdnL would be responsible for the introduction of an alpha-methyl group of the polyketide chain. Alternatively, the beta-lactamase-like protein sdnR might be responsible for the cleavage and transfer of the polyketide chain from the PKS sdnO to sordarin. Two putative cytochrome P450 monooxygenases, sdnQ and sdnT, might catalyze the epoxidations of the polyketide chain to complete the biosynthesis of hypoxysordarin. Transcriptional regulators sdnM and sdnS are presumably encoded for the transcriptional regulation of the expression of the sdn gene cluster. This Sordaria araneosa (Pleurage araneosa) protein is Cytochrome P450 monooxygenase sdnB.